A 182-amino-acid chain; its full sequence is NADH-quinone oxidoreductase subunit B (182 aa).

[4Fe-4S] cluster contacts are provided by C61, C62, C126, and C156.

This sequence belongs to the complex I 20 kDa subunit family. As to quaternary structure, NDH-1 is composed of 14 different subunits. Subunits NuoB, C, D, E, F, and G constitute the peripheral sector of the complex. Requires [4Fe-4S] cluster as cofactor.

It is found in the cell inner membrane. It carries out the reaction a quinone + NADH + 5 H(+)(in) = a quinol + NAD(+) + 4 H(+)(out). Its function is as follows. NDH-1 shuttles electrons from NADH, via FMN and iron-sulfur (Fe-S) centers, to quinones in the respiratory chain. The immediate electron acceptor for the enzyme in this species is believed to be ubiquinone. Couples the redox reaction to proton translocation (for every two electrons transferred, four hydrogen ions are translocated across the cytoplasmic membrane), and thus conserves the redox energy in a proton gradient. In Xanthomonas oryzae pv. oryzae (strain PXO99A), this protein is NADH-quinone oxidoreductase subunit B.